Here is a 131-residue protein sequence, read N- to C-terminus: UPF0146 protein PYRAB01940 (131 aa).

Belongs to the UPF0146 family.

The polypeptide is UPF0146 protein PYRAB01940 (Pyrococcus abyssi (strain GE5 / Orsay)).